A 119-amino-acid polypeptide reads, in one-letter code: Histone H1B, sperm (119 aa).

Residues 8 to 77 (THPPVATAVV…QNKGSFRVNK (70 aa)) enclose the H15 domain. The interval 76–119 (NKTALPKKKKAAKKPKAKKVKKPKSAAKKKTNRARAPKTKKNRN) is disordered. Over residues 80–119 (LPKKKKAAKKPKAKKVKKPKSAAKKKTNRARAPKTKKNRN) the composition is skewed to basic residues.

This sequence belongs to the histone H1/H5 family.

Its subcellular location is the nucleus. The protein resides in the chromosome. In terms of biological role, histones H1 are necessary for the condensation of nucleosome chains into higher-order structures. This is Histone H1B, sperm from Platynereis dumerilii (Dumeril's clam worm).